A 147-amino-acid polypeptide reads, in one-letter code: Large ribosomal subunit protein uL15 (147 aa).

The disordered stretch occupies residues 1 to 42 (MTIKVHHLRPAPGAKTTKTRVGRGEGSKGKTAGRGTKGSKAR).

Belongs to the universal ribosomal protein uL15 family. As to quaternary structure, part of the 50S ribosomal subunit.

Binds to the 23S rRNA. The chain is Large ribosomal subunit protein uL15 from Salinispora tropica (strain ATCC BAA-916 / DSM 44818 / JCM 13857 / NBRC 105044 / CNB-440).